A 365-amino-acid polypeptide reads, in one-letter code: Endophilin-B1 (365 aa).

Met-1 carries the post-translational modification N-acetylmethionine. The segment at Met-1–Leu-30 is membrane-binding amphipathic helix. Residues Met-1–Glu-37 form a required for membrane binding region. Positions Glu-27–Ser-261 constitute a BAR domain. Thr-145 is modified (phosphothreonine; by CDK5). Positions Tyr-155–Leu-195 form a coiled coil. In terms of domain architecture, SH3 spans Gly-305–Asn-365.

It belongs to the endophilin family. In terms of assembly, homodimer, and heterodimer with SH3GLB2. Binds BAX; induction of apoptosis augments BAX binding. Binds DNM1, HTT, AMPH, BIN1 and ARFGAP1. Interacts with UVRAG; UVRAG bridges the interaction to BECN1 indicative for an association with the PI3K complex II (PI3KC3-C2). Post-translationally, phosphorylated at Thr-145 by CDK5; this phosphorylation is required for autophagy induction in starved neurons and facilitates homodimerization.

Its subcellular location is the cytoplasm. The protein localises to the golgi apparatus membrane. The protein resides in the mitochondrion outer membrane. It localises to the cytoplasmic vesicle. It is found in the autophagosome membrane. Its subcellular location is the midbody. May be required for normal outer mitochondrial membrane dynamics. Required for coatomer-mediated retrograde transport in certain cells. May recruit other proteins to membranes with high curvature. May promote membrane fusion. Involved in activation of caspase-dependent apoptosis by promoting BAX/BAK1 activation. Involved in caspase-independent apoptosis during nutrition starvation and involved in the regulation of autophagy. Activates lipid kinase activity of PIK3C3 during autophagy probably by associating with the PI3K complex II (PI3KC3-C2). Associated with PI3KC3-C2 during autophagy may regulate the trafficking of ATG9A from the Golgi complex to the peripheral cytoplasm for the formation of autophagosomes by inducing Golgi membrane tubulation and fragmentation. Involved in regulation of degradative endocytic trafficking and cytokinesis, probably in the context of PI3KC3-C2. The protein is Endophilin-B1 (SH3GLB1) of Bos taurus (Bovine).